The primary structure comprises 192 residues: T-cell surface glycoprotein CD3 epsilon chain (192 aa).

Residues 1 to 21 (MQSGNLWRALGLCLLLVGAWA) form the signal peptide. Over 23 to 114 (DADEQKPYEV…QNCMEVNLME (92 aa)) the chain is Extracellular. One can recognise an Ig-like domain in the interval 26 to 97 (EQKPYEVSIS…EGNKEAAHTL (72 aa)). A disulfide bridge links Cys-43 with Cys-84. The N-linked (GlcNAc...) asparagine glycan is linked to Asn-72. Residues 115–135 (VATIIVVDICVTLGLLLLVYY) form a helical membrane-spanning segment. The Cytoplasmic segment spans residues 136–192 (WSKSRKAKASPMTRGAGAGGRPRGQNKGRPPPVPNPDYEPIRKGQRDLYAGLNQRGV). A disordered region spans residues 145–180 (SPMTRGAGAGGRPRGQNKGRPPPVPNPDYEPIRKGQ). Residues 160-177 (QNKGRPPPVPNPDYEPIR) form an NUMB-binding region region. The ITAM domain occupies 163–190 (GRPPPVPNPDYEPIRKGQRDLYAGLNQR). The tract at residues 164–171 (RPPPVPNP) is proline-rich sequence. Residues Tyr-173 and Tyr-184 each carry the phosphotyrosine modification.

As to quaternary structure, the TCR-CD3 complex is composed of a CD3D/CD3E and a CD3G/CD3E heterodimers that preferentially associate with TCRalpha and TCRbeta, respectively, to form TCRalpha/CD3E/CD3G and TCRbeta/CD3G/CD3E trimers. In turn, the hexamer interacts with CD3Z homodimer to form the TCR-CD3 complex. Alternatively, TCRalpha and TCRbeta can be replaced by TCRgamma and TCRdelta. Interacts with CD6. Interacts (via Proline-rich sequence) with NCK1; the interaction is ligand dependent but independent of tyrosine kinase activation. Phosphorylated on Tyr residues after T-cell receptor triggering by LCK in association with CD4/CD8.

The protein localises to the cell membrane. Its function is as follows. Part of the TCR-CD3 complex present on T-lymphocyte cell surface that plays an essential role in adaptive immune response. When antigen presenting cells (APCs) activate T-cell receptor (TCR), TCR-mediated signals are transmitted across the cell membrane by the CD3 chains CD3D, CD3E, CD3G and CD3Z. All CD3 chains contain immunoreceptor tyrosine-based activation motifs (ITAMs) in their cytoplasmic domain. Upon TCR engagement, these motifs become phosphorylated by Src family protein tyrosine kinases LCK and FYN, resulting in the activation of downstream signaling pathways. In addition of this role of signal transduction in T-cell activation, CD3E plays an essential role in correct T-cell development. Also participates in internalization and cell surface down-regulation of TCR-CD3 complexes via endocytosis sequences present in CD3E cytosolic region. In addition to its role as a TCR coreceptor, it serves as a receptor for ITPRIPL1. Ligand recognition inhibits T-cell activation by promoting interaction with NCK1, which prevents CD3E-ZAP70 interaction and blocks the ERK-NFkB signaling cascade and calcium influx. This chain is T-cell surface glycoprotein CD3 epsilon chain (CD3E), found in Bos taurus (Bovine).